Reading from the N-terminus, the 226-residue chain is MRKHIDIVFSRLSGPILNPPPDNNVIPKTDRKLRITEVILRFAVVIFALVSAIMVGTASGTRDLGGGIRIHAHFTLLKTLPFLVIVDGILAVYSLLQGLRCFLSLYMRHILLNKALAWTIFCCDQALAYVIFAAAASTAETAYISEQGLDELQWIKVCMFFRAYCFKSGAGMINAFLAALCMVFVSGMSVFHLFRLYGEKRAYGHIAEQVVISEEAAERRNSLNGI.

Residues methionine 1–glutamate 37 lie on the Cytoplasmic side of the membrane. A helical membrane pass occupies residues valine 38 to alanine 58. The Extracellular portion of the chain corresponds to serine 59–lysine 78. Residues threonine 79–leucine 99 form a helical membrane-spanning segment. The Cytoplasmic portion of the chain corresponds to arginine 100 to lysine 114. Residues alanine 115–alanine 135 form a helical membrane-spanning segment. Residues alanine 136–alanine 170 are Extracellular-facing. The chain crosses the membrane as a helical span at residues glycine 171–phenylalanine 191. At histidine 192 to isoleucine 226 the chain is on the cytoplasmic side.

The protein belongs to the Casparian strip membrane proteins (CASP) family. Homodimer and heterodimers.

Its subcellular location is the cell membrane. This is CASP-like protein 2BC1 from Picea sitchensis (Sitka spruce).